A 341-amino-acid chain; its full sequence is Biotin synthase (341 aa).

A Radical SAM core domain is found at 40–264 (NSVKLNYLVN…VAPRSELRIA (225 aa)). Positions 55, 59, and 62 each coordinate [4Fe-4S] cluster. [2Fe-2S] cluster is bound by residues C99, C132, C192, and R262. Residues 317–341 (ASAPQGGVEPVLRKRGAGTELQPNA) form a disordered region.

Belongs to the radical SAM superfamily. Biotin synthase family. In terms of assembly, homodimer. It depends on [4Fe-4S] cluster as a cofactor. Requires [2Fe-2S] cluster as cofactor.

The enzyme catalyses (4R,5S)-dethiobiotin + (sulfur carrier)-SH + 2 reduced [2Fe-2S]-[ferredoxin] + 2 S-adenosyl-L-methionine = (sulfur carrier)-H + biotin + 2 5'-deoxyadenosine + 2 L-methionine + 2 oxidized [2Fe-2S]-[ferredoxin]. It functions in the pathway cofactor biosynthesis; biotin biosynthesis; biotin from 7,8-diaminononanoate: step 2/2. Functionally, catalyzes the conversion of dethiobiotin (DTB) to biotin by the insertion of a sulfur atom into dethiobiotin via a radical-based mechanism. The protein is Biotin synthase of Renibacterium salmoninarum (strain ATCC 33209 / DSM 20767 / JCM 11484 / NBRC 15589 / NCIMB 2235).